The primary structure comprises 30 residues: Serum amyloid P-component (30 aa).

Residues 1 to 30 enclose the Pentraxin (PTX) domain; the sequence is APQDLSGKMFIFPQETSTANVXLTARSQDF.

Belongs to the pentraxin family. As to quaternary structure, homopentamer. Discoid arrangement of 5 covalently bound subunits. Ca(2+) is required as a cofactor.

The protein localises to the secreted. In Anarhichas lupus (Atlantic wolffish), this protein is Serum amyloid P-component.